Here is a 337-residue protein sequence, read N- to C-terminus: Metacaspase III c (337 aa).

2 consecutive propeptides follow at residues 1–6 and 116–125; these read MGFLRR and VPPAATGTRR. The residue at position 202 (Cys202) is a Cysteine sulfenic acid (-SOH). Cys202 and Cys259 form a disulfide bridge. Residue His207 is part of the active site. Positions 224, 240, and 241 each coordinate Ca(2+). Residue Cys264 is part of the active site. Residue Asp271 coordinates Ca(2+). The propeptide occupies 290 to 337; that stretch reads NFDFKKLLGKFGIDDFDKFGGEALGKINGDALGKVGKDALGKLNKFFG.

This sequence belongs to the peptidase C14B family. In terms of processing, auto-proteolytic cleavage into a large and a small subunit which probably remain associated by non-covalent bonds. Following oxidative stress, the oxidation of Cys-202 leads to the formation of a disulfide bond between Cys-202 and Cys-259 which enhances catalytic activity.

Activated by Ca(2+). Its function is as follows. Cysteine protease that cleaves specifically after arginine residues. The polypeptide is Metacaspase III c (Phaeodactylum tricornutum (strain CCAP 1055/1)).